Reading from the N-terminus, the 155-residue chain is 6,7-dimethyl-8-ribityllumazine synthase (155 aa).

5-amino-6-(D-ribitylamino)uracil is bound by residues phenylalanine 24, 58–60 (AFE), and 82–84 (VII). 87 to 88 (ST) contacts (2S)-2-hydroxy-3-oxobutyl phosphate. The Proton donor role is filled by histidine 90. 5-amino-6-(D-ribitylamino)uracil is bound at residue phenylalanine 115. Arginine 129 is a binding site for (2S)-2-hydroxy-3-oxobutyl phosphate.

The protein belongs to the DMRL synthase family.

The enzyme catalyses (2S)-2-hydroxy-3-oxobutyl phosphate + 5-amino-6-(D-ribitylamino)uracil = 6,7-dimethyl-8-(1-D-ribityl)lumazine + phosphate + 2 H2O + H(+). Its pathway is cofactor biosynthesis; riboflavin biosynthesis; riboflavin from 2-hydroxy-3-oxobutyl phosphate and 5-amino-6-(D-ribitylamino)uracil: step 1/2. Functionally, catalyzes the formation of 6,7-dimethyl-8-ribityllumazine by condensation of 5-amino-6-(D-ribitylamino)uracil with 3,4-dihydroxy-2-butanone 4-phosphate. This is the penultimate step in the biosynthesis of riboflavin. In Chlorobium limicola (strain DSM 245 / NBRC 103803 / 6330), this protein is 6,7-dimethyl-8-ribityllumazine synthase.